The following is a 21-amino-acid chain: Pedibin (21 aa).

Residues 1–21 (AGEDVSHELEEKEKALANHSE) are disordered.

Functionally, morphogenetically active peptide. Active in foot development. The chain is Pedibin from Hydra vulgaris (Hydra).